We begin with the raw amino-acid sequence, 1044 residues long: Isoleucine--tRNA ligase (1044 aa).

The short motif at 48–58 (PFATGLPHFGH) is the 'HIGH' region element. The 'KMSKS' region motif lies at 594–598 (KMSKS). Lys-597 contacts ATP.

The protein belongs to the class-I aminoacyl-tRNA synthetase family. IleS type 2 subfamily. In terms of assembly, monomer. The cofactor is Zn(2+).

It localises to the cytoplasm. It carries out the reaction tRNA(Ile) + L-isoleucine + ATP = L-isoleucyl-tRNA(Ile) + AMP + diphosphate. Functionally, catalyzes the attachment of isoleucine to tRNA(Ile). As IleRS can inadvertently accommodate and process structurally similar amino acids such as valine, to avoid such errors it has two additional distinct tRNA(Ile)-dependent editing activities. One activity is designated as 'pretransfer' editing and involves the hydrolysis of activated Val-AMP. The other activity is designated 'posttransfer' editing and involves deacylation of mischarged Val-tRNA(Ile). The polypeptide is Isoleucine--tRNA ligase (Borrelia recurrentis (strain A1)).